The chain runs to 122 residues: Small ribosomal subunit protein uS13 (122 aa).

The tract at residues 95–122 is disordered; it reads QLPVRGQRTHTNARTRKGKAKPIAGKKK.

The protein belongs to the universal ribosomal protein uS13 family. In terms of assembly, part of the 30S ribosomal subunit. Forms a loose heterodimer with protein S19. Forms two bridges to the 50S subunit in the 70S ribosome.

Functionally, located at the top of the head of the 30S subunit, it contacts several helices of the 16S rRNA. In the 70S ribosome it contacts the 23S rRNA (bridge B1a) and protein L5 of the 50S subunit (bridge B1b), connecting the 2 subunits; these bridges are implicated in subunit movement. Contacts the tRNAs in the A and P-sites. The sequence is that of Small ribosomal subunit protein uS13 from Beijerinckia indica subsp. indica (strain ATCC 9039 / DSM 1715 / NCIMB 8712).